The sequence spans 89 residues: Phasin PhaP (89 aa).

Helix stretches follow at residues 3-26 (TQFF…TWME) and 39-83 (DTFE…ALRQ).

Homotetramer.

The protein resides in the cellular thylakoid membrane. It is found in the cytoplasm. It participates in biopolymer metabolism; poly-(R)-3-hydroxybutanoate biosynthesis. Its function is as follows. A phasin, it attaches to the polyhydroxybutyrate (PHB) granule surface regulating the number and size of PHB granules within a cell. It probably also acts as a regulator affecting the biosynthetic activity of PHB synthase in vivo. This is Phasin PhaP from Synechocystis sp. (strain ATCC 27184 / PCC 6803 / Kazusa).